The chain runs to 274 residues: Large ribosomal subunit protein uL2 (274 aa).

Residues 221–274 (RGTAMNPVDHPHGGGEGRNFGKHPVTPWGVQTKGKKTRSNKRTDKFIVRRRSKK) form a disordered region.

This sequence belongs to the universal ribosomal protein uL2 family. In terms of assembly, part of the 50S ribosomal subunit. Forms a bridge to the 30S subunit in the 70S ribosome.

One of the primary rRNA binding proteins. Required for association of the 30S and 50S subunits to form the 70S ribosome, for tRNA binding and peptide bond formation. It has been suggested to have peptidyltransferase activity; this is somewhat controversial. Makes several contacts with the 16S rRNA in the 70S ribosome. This chain is Large ribosomal subunit protein uL2, found in Yersinia pseudotuberculosis serotype O:1b (strain IP 31758).